The primary structure comprises 23 residues: Acidic phospholipase A2 CTs-A2 (23 aa).

Ca(2+) is required as a cofactor. Contains 7 disulfide bonds. Expressed by the venom gland.

Its subcellular location is the secreted. The catalysed reaction is a 1,2-diacyl-sn-glycero-3-phosphocholine + H2O = a 1-acyl-sn-glycero-3-phosphocholine + a fatty acid + H(+). Its function is as follows. Snake venom phospholipase A2 (PLA2) that shows a moderate inhibition of ADP-induced human platelet aggregation when tested on platelet rich plasma. Exhibits moderate hydrolytic activities and prefers the anionic micelles (dPPC with deoxycholate) to the zwitterionic micelles (dPPC with Triton X-100). PLA2 catalyzes the calcium-dependent hydrolysis of the 2-acyl groups in 3-sn-phosphoglycerides. This Trimeresurus stejnegeri (Chinese green tree viper) protein is Acidic phospholipase A2 CTs-A2.